We begin with the raw amino-acid sequence, 520 residues long: Developmental regulatory protein wetA (520 aa).

Disordered regions lie at residues 49-72 (GDLPPTVSTPKRHQSPQPWSNEWS), 104-165 (VPSR…MRSS), 236-295 (QSPS…WQSD), 367-453 (DHSF…GSNK), and 471-496 (LTGVAPSGSSKTKARREQEARDRRRK). 3 stretches are compositionally biased toward polar residues: residues 63 to 72 (SPQPWSNEWS), 104 to 114 (VPSRPTASHGL), and 155 to 165 (QSFSPSLMRSS). Low complexity predominate over residues 237–251 (SPSVSMPSPSIAMSA). The segment covering 252–261 (RQQQHYIAQP) has biased composition (polar residues). Positions 262-295 (SSSSLTNSSPSSADDIFSSSHSSDPHSLSSWQSD) are enriched in low complexity. The span at 367–401 (DHSFSSSNMLPATPQKFDTSFNTSQVHNVSRSPSL) shows a compositional bias: polar residues. The segment covering 420–429 (PTHRRTHSRK) has biased composition (basic residues). The span at 436 to 453 (NAPKPAKASGSSSRGSNK) shows a compositional bias: low complexity.

The protein belongs to the wetA family.

BrlA, abaA and wetA are pivotal regulators of conidiophore development and conidium maturation. They act individually and together to regulate their own expression and that of numerous other sporulation-specific genes. Responsible for activating a set of genes whose products make up the final two conidial wall layers or direct their assembly and though this activity is responsible for acquisition of spore dormancy. The chain is Developmental regulatory protein wetA from Penicillium rubens (strain ATCC 28089 / DSM 1075 / NRRL 1951 / Wisconsin 54-1255) (Penicillium chrysogenum).